We begin with the raw amino-acid sequence, 497 residues long: Vacuolar-processing enzyme beta-isozyme 1 (497 aa).

The first 23 residues, 1–23 (MAARCWVWGFVVALLAVAAAADG), serve as a signal peptide directing secretion. Asparagine 153 carries an N-linked (GlcNAc...) asparagine glycan. Residue histidine 180 is part of the active site. Cysteine 222 serves as the catalytic Nucleophile. Cysteine 255 and cysteine 269 form a disulfide bridge. Asparagine 340 is a glycosylation site (N-linked (GlcNAc...) asparagine). Cystine bridges form between cysteine 432–cysteine 462 and cysteine 444–cysteine 479.

It belongs to the peptidase C13 family. Post-translationally, auto-catalytic activation.

Its subcellular location is the protein storage vacuole. The enzyme catalyses Hydrolysis of proteins and small molecule substrates at -Asn-|-Xaa- bonds.. Its function is as follows. Asparagine-specific endopeptidase that may be involved in processing of proteins targeted to vacuoles. Cysteine protease required for post-translational proteolysis of seed storage proteins in the protein storage vacuole (PSV) of developing seeds, by processing of proglutelin precursor to mature glutelin subunits, thus contributing to the formation of protein crystalline structures in PSV. The polypeptide is Vacuolar-processing enzyme beta-isozyme 1 (Oryza sativa subsp. indica (Rice)).